Here is a 252-residue protein sequence, read N- to C-terminus: MSLTGLPDIRKKIGQFHHLRIYKQILSLQGNFARLNYFLGDVFPANLRSASVSVFFEVRLGPRIPDCIVLLKSVDAKDEFAFHCYFFEFKTTLGKSTMQSVHHNCIHQAQYLQGLRQLQQSISFLDQYLIADEVSWNVVPVICFFRQWGLKLDFFKKFSGKTKRLSFSFIRDLFARSQDGAVQSLLSIPNYTNFRRACQKHTDLYRKRCRKAPKSVLTKTSGENRSRASRQVAKNAPKNRIRRTAKKDAKRQ.

The interval 215 to 252 (SVLTKTSGENRSRASRQVAKNAPKNRIRRTAKKDAKRQ) is disordered. Residues 237 to 252 (PKNRIRRTAKKDAKRQ) are compositionally biased toward basic residues.

It belongs to the herpesviridae UL24 family.

The protein localises to the virion. The protein resides in the host cytoplasm. It is found in the host nucleus. Its subcellular location is the host nucleolus. It localises to the host Golgi apparatus. Functionally, may participate in nuclear egress of viral particles. Plays a role in the dispersal of several host nucleolar proteins including NCL/nucleolin and NPM1. Since deletion of host NCL/nucleolin negatively impact on nuclear egress, UL24 supposedly acts on this process through its effect on host nucleoli. The sequence is that of Protein UL24 homolog (U49) from Homo sapiens (Human).